Reading from the N-terminus, the 581-residue chain is Proline--tRNA ligase (581 aa).

The protein belongs to the class-II aminoacyl-tRNA synthetase family. ProS type 1 subfamily. As to quaternary structure, homodimer.

The protein localises to the cytoplasm. It catalyses the reaction tRNA(Pro) + L-proline + ATP = L-prolyl-tRNA(Pro) + AMP + diphosphate. Functionally, catalyzes the attachment of proline to tRNA(Pro) in a two-step reaction: proline is first activated by ATP to form Pro-AMP and then transferred to the acceptor end of tRNA(Pro). As ProRS can inadvertently accommodate and process non-cognate amino acids such as alanine and cysteine, to avoid such errors it has two additional distinct editing activities against alanine. One activity is designated as 'pretransfer' editing and involves the tRNA(Pro)-independent hydrolysis of activated Ala-AMP. The other activity is designated 'posttransfer' editing and involves deacylation of mischarged Ala-tRNA(Pro). The misacylated Cys-tRNA(Pro) is not edited by ProRS. In Acidovorax ebreus (strain TPSY) (Diaphorobacter sp. (strain TPSY)), this protein is Proline--tRNA ligase.